The primary structure comprises 170 residues: Odorant-binding protein 2b (170 aa).

The first 15 residues, M1–A15, serve as a signal peptide directing secretion. C74 and C166 are disulfide-bonded.

It belongs to the calycin superfamily. Lipocalin family. Strongly expressed in genital sphere organs such as the prostate and mammary glands.

Its subcellular location is the secreted. Its function is as follows. Probably binds and transports small hydrophobic volatile molecules. The sequence is that of Odorant-binding protein 2b (OBP2B) from Homo sapiens (Human).